A 530-amino-acid chain; its full sequence is Probable 1,4-beta-D-glucan cellobiohydrolase B (530 aa).

An N-terminal signal peptide occupies residues 1–26 (MLASTFSYRMYKTALILAALLGSGQA). Positions 27–461 (QQVGTSQAEV…SNIKVGPIGS (435 aa)) are catalytic. The Nucleophile role is filled by Glu238. Glu243 (proton donor) is an active-site residue. N-linked (GlcNAc...) asparagine glycosylation is present at Asn296. The disordered stretch occupies residues 462–492 (TFNSGGSNPGGGTTTTAKPTTTTTTAGSPGG). The ser/Thr-rich linker stretch occupies residues 462–494 (TFNSGGSNPGGGTTTTAKPTTTTTTAGSPGGTG). Residues 475–488 (TTTAKPTTTTTTAG) show a composition bias toward low complexity. The 37-residue stretch at 494 to 530 (GVAQHYGQCGGNGWQGPTTCASPYTCQKLNDFYSQCL) folds into the CBM1 domain. 2 cysteine pairs are disulfide-bonded: Cys502–Cys519 and Cys513–Cys529.

It belongs to the glycosyl hydrolase 7 (cellulase C) family.

It is found in the secreted. It carries out the reaction Hydrolysis of (1-&gt;4)-beta-D-glucosidic linkages in cellulose and cellotetraose, releasing cellobiose from the non-reducing ends of the chains.. Functionally, the biological conversion of cellulose to glucose generally requires three types of hydrolytic enzymes: (1) Endoglucanases which cut internal beta-1,4-glucosidic bonds; (2) Exocellobiohydrolases that cut the disaccharide cellobiose from the non-reducing end of the cellulose polymer chain; (3) Beta-1,4-glucosidases which hydrolyze the cellobiose and other short cello-oligosaccharides to glucose. This Neosartorya fischeri (strain ATCC 1020 / DSM 3700 / CBS 544.65 / FGSC A1164 / JCM 1740 / NRRL 181 / WB 181) (Aspergillus fischerianus) protein is Probable 1,4-beta-D-glucan cellobiohydrolase B (cbhB).